A 165-amino-acid polypeptide reads, in one-letter code: Ecotin-like protein 4 (165 aa).

It belongs to the protease inhibitor I11 (ecotin) family.

In Trypanosoma brucei brucei (strain 927/4 GUTat10.1), this protein is Ecotin-like protein 4.